Here is a 285-residue protein sequence, read N- to C-terminus: Steroidogenic acute regulatory protein (285 aa).

Residues 67 to 280 (TLNDVEMSYI…LRSRMTSSSN (214 aa)) form the START domain.

In terms of assembly, may interact with TSPO.

It localises to the mitochondrion. It carries out the reaction cholesterol(in) = cholesterol(out). The protein operates within steroid metabolism; cholesterol metabolism. Functionally, plays a key role in steroid hormone synthesis by enhancing the metabolism of cholesterol into pregnenolone. Mediates the transfer of cholesterol from the outer mitochondrial membrane to the inner mitochondrial membrane where it is cleaved to pregnenolone. In Xenopus laevis (African clawed frog), this protein is Steroidogenic acute regulatory protein (star).